The following is a 255-amino-acid chain: Malonyl-[acyl-carrier protein] O-methyltransferase (255 aa).

Belongs to the methyltransferase superfamily.

It carries out the reaction malonyl-[ACP] + S-adenosyl-L-methionine = malonyl-[ACP] methyl ester + S-adenosyl-L-homocysteine. Its pathway is cofactor biosynthesis; biotin biosynthesis. Functionally, converts the free carboxyl group of a malonyl-thioester to its methyl ester by transfer of a methyl group from S-adenosyl-L-methionine (SAM). It allows to synthesize pimeloyl-ACP via the fatty acid synthetic pathway. The sequence is that of Malonyl-[acyl-carrier protein] O-methyltransferase from Acinetobacter baylyi (strain ATCC 33305 / BD413 / ADP1).